The sequence spans 127 residues: Fumarate reductase subunit C (127 aa).

Helical transmembrane passes span 30–50 (ATIL…GSLV), 67–87 (IVVA…QTFF), and 107–127 (VVVL…LVIV).

This sequence belongs to the FrdC family. Part of an enzyme complex containing four subunits: a flavoprotein (FrdA), an iron-sulfur protein (FrdB), and two hydrophobic anchor proteins (FrdC and FrdD).

The protein resides in the cell inner membrane. In terms of biological role, anchors the catalytic components of the fumarate reductase complex to the cell membrane, binds quinones. The chain is Fumarate reductase subunit C from Aliivibrio salmonicida (strain LFI1238) (Vibrio salmonicida (strain LFI1238)).